The following is a 78-amino-acid chain: MSRVCQVTGKRPAVGNNRSHALNATRRRFLPNLHTHRFWVESENRFVTLRLTAKGMRIIDKKGIDAVLAEIRARGEKI.

The segment at 1-20 (MSRVCQVTGKRPAVGNNRSH) is disordered.

It belongs to the bacterial ribosomal protein bL28 family.

In Actinobacillus pleuropneumoniae serotype 7 (strain AP76), this protein is Large ribosomal subunit protein bL28.